Here is a 417-residue protein sequence, read N- to C-terminus: NADH-quinone oxidoreductase subunit D (417 aa).

This sequence belongs to the complex I 49 kDa subunit family. NDH-1 is composed of 14 different subunits. Subunits NuoB, C, D, E, F, and G constitute the peripheral sector of the complex.

It localises to the cell inner membrane. It carries out the reaction a quinone + NADH + 5 H(+)(in) = a quinol + NAD(+) + 4 H(+)(out). In terms of biological role, NDH-1 shuttles electrons from NADH, via FMN and iron-sulfur (Fe-S) centers, to quinones in the respiratory chain. The immediate electron acceptor for the enzyme in this species is believed to be ubiquinone. Couples the redox reaction to proton translocation (for every two electrons transferred, four hydrogen ions are translocated across the cytoplasmic membrane), and thus conserves the redox energy in a proton gradient. In Coxiella burnetii (strain RSA 331 / Henzerling II), this protein is NADH-quinone oxidoreductase subunit D.